The sequence spans 474 residues: PRAME family member 2 (474 aa).

The stretch at 97–124 (RWKLQVLDLRDVDENFWARWPGAWALSC) is one LRR 1; degenerate repeat. An LRR 2; degenerate repeat occupies 179–203 (HLCCSKLVNYLTPIKYLRKSLKIIY). Residues 204–230 (INSIGELEIHNTCWPHLIRKLYCYLKE) form an LRR 3; degenerate repeat. An LRR 4; degenerate repeat occupies 231 to 265 (MKTLCKLVFSRCHHYTSDNELEGWLVTRFTSVFLR). LRR repeat units follow at residues 266 to 291 (LEHLQLLKIKLITFFSGHLEQLIRCL), 292 to 323 (QNPLENLELTCGNLLEEDLKCLSQFPSLGYLK), 324 to 342 (HLNLSYVLLFRISLEPLGA), 348 to 375 (AASLETLVLEGCQIHYSQLSAILPGLSC), and 376 to 400 (CSQLTTFYFGSNCMSIDALKDLLRH).

The protein belongs to the PRAME family.

The polypeptide is PRAME family member 2 (Homo sapiens (Human)).